We begin with the raw amino-acid sequence, 442 residues long: Thymidine phosphorylase (442 aa).

This sequence belongs to the thymidine/pyrimidine-nucleoside phosphorylase family. Homodimer.

The enzyme catalyses thymidine + phosphate = 2-deoxy-alpha-D-ribose 1-phosphate + thymine. Its pathway is pyrimidine metabolism; dTMP biosynthesis via salvage pathway; dTMP from thymine: step 1/2. Functionally, the enzymes which catalyze the reversible phosphorolysis of pyrimidine nucleosides are involved in the degradation of these compounds and in their utilization as carbon and energy sources, or in the rescue of pyrimidine bases for nucleotide synthesis. This chain is Thymidine phosphorylase, found in Vibrio parahaemolyticus serotype O3:K6 (strain RIMD 2210633).